A 234-amino-acid polypeptide reads, in one-letter code: Proteasome subunit beta (234 aa).

The segment at 1–35 is disordered; sequence MNPDLNMNPHDSGRTDPYAPELGEIATDEGDGENV. Positions 1-39 are cleaved as a propeptide — removed in mature form; by autocatalysis; the sequence is MNPDLNMNPHDSGRTDPYAPELGEIATDEGDGENVTKTG. Residue threonine 40 is the Nucleophile of the active site.

This sequence belongs to the peptidase T1B family. In terms of assembly, the 20S proteasome core is composed of 14 alpha and 14 beta subunits that assemble into four stacked heptameric rings, resulting in a barrel-shaped structure. The two inner rings, each composed of seven catalytic beta subunits, are sandwiched by two outer rings, each composed of seven alpha subunits. The catalytic chamber with the active sites is on the inside of the barrel. Has a gated structure, the ends of the cylinder being occluded by the N-termini of the alpha-subunits. Is capped at one or both ends by the proteasome regulatory ATPase, PAN.

It is found in the cytoplasm. The catalysed reaction is Cleavage of peptide bonds with very broad specificity.. The formation of the proteasomal ATPase PAN-20S proteasome complex, via the docking of the C-termini of PAN into the intersubunit pockets in the alpha-rings, triggers opening of the gate for substrate entry. Interconversion between the open-gate and close-gate conformations leads to a dynamic regulation of the 20S proteasome proteolysis activity. Component of the proteasome core, a large protease complex with broad specificity involved in protein degradation. The sequence is that of Proteasome subunit beta from Halorhabdus utahensis (strain DSM 12940 / JCM 11049 / AX-2).